The chain runs to 341 residues: Glycerol-1-phosphate dehydrogenase [NAD(P)+] (341 aa).

NAD(+) contacts are provided by residues 81 to 85 (GKAID) and 103 to 106 (TTAS). Residue Asp-108 participates in substrate binding. Position 112 (Ser-112) interacts with NAD(+). Asp-151 is a substrate binding site. Positions 151 and 232 each coordinate Zn(2+). His-236 is a substrate binding site. A Zn(2+)-binding site is contributed by His-253.

The protein belongs to the glycerol-1-phosphate dehydrogenase family. Zn(2+) serves as cofactor.

Its subcellular location is the cytoplasm. The enzyme catalyses sn-glycerol 1-phosphate + NAD(+) = dihydroxyacetone phosphate + NADH + H(+). It catalyses the reaction sn-glycerol 1-phosphate + NADP(+) = dihydroxyacetone phosphate + NADPH + H(+). It functions in the pathway membrane lipid metabolism; glycerophospholipid metabolism. In terms of biological role, catalyzes the NAD(P)H-dependent reduction of dihydroxyacetonephosphate (DHAP or glycerone phosphate) to glycerol 1-phosphate (G1P). The G1P thus generated is used as the glycerophosphate backbone of phospholipids in the cellular membranes of Archaea. In Methanococcus aeolicus (strain ATCC BAA-1280 / DSM 17508 / OCM 812 / Nankai-3), this protein is Glycerol-1-phosphate dehydrogenase [NAD(P)+].